Reading from the N-terminus, the 92-residue chain is Small ribosomal subunit protein uS19 (92 aa).

This sequence belongs to the universal ribosomal protein uS19 family.

Protein S19 forms a complex with S13 that binds strongly to the 16S ribosomal RNA. The sequence is that of Small ribosomal subunit protein uS19 from Paracidovorax citrulli (strain AAC00-1) (Acidovorax citrulli).